Here is a 449-residue protein sequence, read N- to C-terminus: Ribulose bisphosphate carboxylase large chain (449 aa).

An N6,N6,N6-trimethyllysine modification is found at K7. Residues N116 and T166 each coordinate substrate. K168 serves as the catalytic Proton acceptor. Residue K170 coordinates substrate. Residues K194, D196, and E197 each coordinate Mg(2+). Position 194 is an N6-carboxylysine (K194). H287 functions as the Proton acceptor in the catalytic mechanism. R288, H320, and S372 together coordinate substrate.

This sequence belongs to the RuBisCO large chain family. Type I subfamily. In terms of assembly, heterohexadecamer of 8 large chains and 8 small chains; disulfide-linked. The disulfide link is formed within the large subunit homodimers. The cofactor is Mg(2+). Post-translationally, the disulfide bond which can form in the large chain dimeric partners within the hexadecamer appears to be associated with oxidative stress and protein turnover.

It localises to the plastid. The protein localises to the chloroplast. It carries out the reaction 2 (2R)-3-phosphoglycerate + 2 H(+) = D-ribulose 1,5-bisphosphate + CO2 + H2O. The enzyme catalyses D-ribulose 1,5-bisphosphate + O2 = 2-phosphoglycolate + (2R)-3-phosphoglycerate + 2 H(+). Its function is as follows. RuBisCO catalyzes two reactions: the carboxylation of D-ribulose 1,5-bisphosphate, the primary event in carbon dioxide fixation, as well as the oxidative fragmentation of the pentose substrate in the photorespiration process. Both reactions occur simultaneously and in competition at the same active site. In Liriope muscari (Big blue lilyturf), this protein is Ribulose bisphosphate carboxylase large chain.